The primary structure comprises 150 residues: Snaclec rhinocetin subunit beta (150 aa).

A signal peptide spans 1-23 (MGRFIFLSSGLLVVFLSLSGTGA). Cystine bridges form between Cys-27/Cys-38, Cys-55/Cys-144, and Cys-121/Cys-136. The region spanning 34–145 (YEGYCYKVFK…CNRQQYFVCK (112 aa)) is the C-type lectin domain.

The protein belongs to the snaclec family. As to quaternary structure, heterodimer; disulfide-linked. Expressed by the venom gland.

The protein resides in the secreted. Antagonist of the alpha-2 subunit of the integrin alpha-2/beta-1 (ITGA2/ITGB1) on human platelets and endothelial cells. This protein inhibits collagen-stimulated activation of human platelets in a dose-dependent manner. In addition, it antagonizes the binding of monoclonal antibodies against the alpha-2 subunit of integrin alpha-2/beta-1 to platelets and it coimmunoprecipitates with this integrin. The polypeptide is Snaclec rhinocetin subunit beta (Bitis rhinoceros (West African gaboon viper)).